Reading from the N-terminus, the 670-residue chain is Oxidoreductase PigB (670 aa).

The N-terminal stretch at 1 to 19 is a signal peptide; sequence MIIQRLFGILYMLAGLAKA. 4 consecutive transmembrane segments (helical) span residues 53-73, 76-96, 98-118, and 238-258; these read GDVINILVGVVLFGSGVILML, LWTTLVIYAQLLMMAVFVVIL, QSQPQVMLLDGVFALAALYML, and LVFFDTFLLLKCLGEIVVGFI.

Belongs to the flavin monoamine oxidase family. FAD serves as cofactor.

Its subcellular location is the membrane. It participates in antibiotic biosynthesis; prodigiosin biosynthesis. Involved in the biosynthesis of 2-methyl-3-n-amyl-pyrrole (MAP), one of the terminal products involved in the biosynthesis of the red antibiotic prodigiosin (Pig). Catalyzes the oxidation of dihydro form of MAP (H2MAP) to yield MAP. The sequence is that of Oxidoreductase PigB from Serratia sp. (strain ATCC 39006) (Prodigiosinella confusarubida).